The following is a 526-amino-acid chain: MGSSKSKPKDPSQRRRSLEPPDSTHHGGFPASQTPDETAAPDAHRNPSRSFGTVATEPKLFWGFNTSDTVTSPQRAGALAGGVTTFVALYDYESWTETDLSFKKGERLQIVNNTEGDWWLAHSLTTGQTGYIPSNYVAPSDSIQAEEWYFGKITRRESERLLLNPENPRGTFLVRKSETAKGAYCLSVSDFDNAKGPNVKHYKICKLYSGGFYITSRTQFGSLQQLVAYYSKHADGLCHRLTNVCPTSKPQTQGLAKDAWEIPRESLRLEAKLGQGCFGEVWMGTWNGTTRVAIKTLKPGTMSPEAFLQEAQVMKKLRHEKLVQLYAVVSEEPIYIVIEYMSKGSLLDFLKGEMGKYLRLPQLVDMAAQIASGMAYVERMNYVHRDLRAANILVGENLVCKVADFGLARLIEDNEYTARQGAKFPIKWTAPEAALYGRFTIKSDVWSFGILLTELTTKGRVPYPGMVNREVLDQVERAYRMPCPPECPESLHDLMCQCWRKDPEERPTFKYLQAQLLPACVLEVAE.

The segment at 1–52 is disordered; that stretch reads MGSSKSKPKDPSQRRRSLEPPDSTHHGGFPASQTPDETAAPDAHRNPSRSFG. Gly2 is lipidated: N-myristoyl glycine; by host. Over residues 7-25 the composition is skewed to basic and acidic residues; the sequence is KPKDPSQRRRSLEPPDSTH. In terms of domain architecture, SH3 spans 81–142; that stretch reads GGVTTFVALY…PSNYVAPSDS (62 aa). One can recognise an SH2 domain in the interval 148–245; the sequence is WYFGKITRRE…GLCHRLTNVC (98 aa). A Protein kinase domain is found at 267-517; that stretch reads LRLEAKLGQG…TFKYLQAQLL (251 aa). ATP-binding positions include 273 to 281 and Lys295; that span reads LGQGCFGEV. The active-site Proton acceptor is Asp386. The residue at position 416 (Tyr416) is a Phosphotyrosine; by autocatalysis.

This sequence belongs to the protein kinase superfamily. Tyr protein kinase family. SRC subfamily. Requires Mn(2+) as cofactor. The phosphorylated form is termed pp60v-src.

The enzyme catalyses L-tyrosyl-[protein] + ATP = O-phospho-L-tyrosyl-[protein] + ADP + H(+). In terms of biological role, this phosphoprotein, required for both the initiation and the maintenance of neoplastic transformation, is a protein kinase that catalyzes the phosphorylation of tyrosine residues in vitro. The chain is Tyrosine-protein kinase transforming protein Src (V-SRC) from Gallus gallus (Chicken).